An 88-amino-acid chain; its full sequence is Putative membrane protein insertion efficiency factor (88 aa).

Positions 66 to 88 (DFVPPKKDKNADSEHSCKAHHHH) are disordered. Residues 69-82 (PPKKDKNADSEHSC) show a composition bias toward basic and acidic residues.

Belongs to the UPF0161 family.

The protein localises to the cell membrane. Could be involved in insertion of integral membrane proteins into the membrane. This chain is Putative membrane protein insertion efficiency factor, found in Listeria monocytogenes serotype 4a (strain HCC23).